A 237-amino-acid chain; its full sequence is Probable transcriptional regulatory protein Exig_1693 (237 aa).

This sequence belongs to the TACO1 family. YeeN subfamily.

The protein resides in the cytoplasm. This chain is Probable transcriptional regulatory protein Exig_1693, found in Exiguobacterium sibiricum (strain DSM 17290 / CCUG 55495 / CIP 109462 / JCM 13490 / 255-15).